The sequence spans 265 residues: Ribosomal RNA small subunit methyltransferase A (265 aa).

S-adenosyl-L-methionine-binding residues include His-11, Leu-13, Gly-38, Glu-59, Asp-83, and Asn-100.

It belongs to the class I-like SAM-binding methyltransferase superfamily. rRNA adenine N(6)-methyltransferase family. RsmA subfamily.

It localises to the cytoplasm. The enzyme catalyses adenosine(1518)/adenosine(1519) in 16S rRNA + 4 S-adenosyl-L-methionine = N(6)-dimethyladenosine(1518)/N(6)-dimethyladenosine(1519) in 16S rRNA + 4 S-adenosyl-L-homocysteine + 4 H(+). In terms of biological role, specifically dimethylates two adjacent adenosines (A1518 and A1519) in the loop of a conserved hairpin near the 3'-end of 16S rRNA in the 30S particle. May play a critical role in biogenesis of 30S subunits. The sequence is that of Ribosomal RNA small subunit methyltransferase A from Thermosynechococcus vestitus (strain NIES-2133 / IAM M-273 / BP-1).